The chain runs to 222 residues: Ribonuclease T (222 aa).

The Exonuclease domain occupies 20 to 194 (VVIDVETAGF…YDTERTAELF (175 aa)). Mg(2+)-binding residues include aspartate 23, glutamate 25, histidine 181, and aspartate 186. Catalysis depends on histidine 181, which acts as the Proton donor/acceptor.

This sequence belongs to the RNase T family. In terms of assembly, homodimer. It depends on Mg(2+) as a cofactor.

Functionally, trims short 3' overhangs of a variety of RNA species, leaving a one or two nucleotide 3' overhang. Responsible for the end-turnover of tRNA: specifically removes the terminal AMP residue from uncharged tRNA (tRNA-C-C-A). Also appears to be involved in tRNA biosynthesis. This chain is Ribonuclease T, found in Shewanella oneidensis (strain ATCC 700550 / JCM 31522 / CIP 106686 / LMG 19005 / NCIMB 14063 / MR-1).